Here is an 88-residue protein sequence, read N- to C-terminus: Putative membrane protein insertion efficiency factor (88 aa).

The interval 66 to 88 (DFVPPKKDKNADSEHSCKAHHHH) is disordered. Over residues 69-82 (PPKKDKNADSEHSC) the composition is skewed to basic and acidic residues.

Belongs to the UPF0161 family.

It is found in the cell membrane. In terms of biological role, could be involved in insertion of integral membrane proteins into the membrane. This is Putative membrane protein insertion efficiency factor from Listeria monocytogenes serotype 4a (strain HCC23).